The chain runs to 1091 residues: ATP-dependent RNA helicase ddx54 (1091 aa).

Disordered regions lie at residues 1 to 63 (MVKP…KEEF) and 150 to 231 (DNSN…KTGG). Over residues 26-35 (MKGKKLETKS) the composition is skewed to basic and acidic residues. Polar residues predominate over residues 150–161 (DNSNFDNNGDQF). Basic and acidic residues predominate over residues 196–207 (KKEEIESSEKFE). Residues 230–258 (GGFQSMDLTKNLLKAILKKGFNVPTPIQR) carry the Q motif motif. Residues 261-433 (IPMILDGHDI…RAGLNNPKLI (173 aa)) form the Helicase ATP-binding domain. 274–281 (ARTGSGKT) provides a ligand contact to ATP. The short motif at 381–384 (DEAD) is the DEAD box element. In terms of domain architecture, Helicase C-terminal spans 478–632 (TETTTTTTTN…KFQYEGQTIN (155 aa)). 2 disordered regions span residues 801-896 (EEML…TPEN) and 933-1091 (KRKG…KSRK). The segment covering 814–823 (DNNKDIKMNE) has biased composition (basic and acidic residues). Over residues 824 to 855 (NDDENDDDDEEGENDDDEEEENEKDEDDEEDE) the composition is skewed to acidic residues. Basic and acidic residues-rich tracts occupy residues 865–874 (ESSDKNDNNK), 944–975 (DADR…EEWK), and 1008–1019 (QGREKEKKDNKA). Positions 1020 to 1029 (SHAKGSHGLK) are enriched in basic residues. The span at 1031–1052 (RPSELKDKNQISKNRSEKERKM) shows a compositional bias: basic and acidic residues. Over residues 1068–1079 (SGGGGGGKGSKF) the composition is skewed to gly residues.

This sequence belongs to the DEAD box helicase family. DDX54/DBP10 subfamily.

Its subcellular location is the nucleus. It is found in the nucleolus. It catalyses the reaction ATP + H2O = ADP + phosphate + H(+). Functionally, ATP-binding RNA helicase which may be involved in the ribosome biogenesis. The protein is ATP-dependent RNA helicase ddx54 (helA) of Dictyostelium discoideum (Social amoeba).